Here is a 333-residue protein sequence, read N- to C-terminus: Serine/threonine-protein phosphatase PP1-beta (333 aa).

Asp63, His65, Asp91, and Asn123 together coordinate Mn(2+). The active-site Proton donor is His124. Positions 172 and 247 each coordinate Mn(2+). A disordered region spans residues 306–333; that stretch reads GAGGVGSNRPVTPPRNAPAAQPKKGAKK. Over residues 322–333 the composition is skewed to low complexity; sequence APAAQPKKGAKK.

It belongs to the PPP phosphatase family. PP-1 subfamily. Interacts with lab-1; the interaction is direct. Interacts with knl-1; the interaction is direct. It depends on Mn(2+) as a cofactor. As to expression, expressed in gonads, nervous system, intestine and muscles.

It localises to the cytoplasm. The protein resides in the nucleus. It catalyses the reaction O-phospho-L-seryl-[protein] + H2O = L-seryl-[protein] + phosphate. It carries out the reaction O-phospho-L-threonyl-[protein] + H2O = L-threonyl-[protein] + phosphate. With respect to regulation, inhibited by okadaic acid. In terms of biological role, serine/threonine-protein phosphatase essential for chromosomal dynamics during meiosis and mitosis. During meiosis, promotes chromosomal cohesion and germline immortality via a small RNA-mediated genome silencing pathway. Antagonizes the function of air-2 kinase during meiosis I and mitosis to promote chromatid cohesion and spindle attachment. Dephosphorylates histone H3 at 'Ser-10'. Dephosphorylates histone H3 at 'Thr-3'. Also involved in the activation of chloride channel clh-3 during cell swelling and meiotic maturation. Promotes small RNA-mediated genome silencing over multiple generations. Essential for embryogenesis. The sequence is that of Serine/threonine-protein phosphatase PP1-beta from Caenorhabditis elegans.